The primary structure comprises 734 residues: Photosystem I P700 chlorophyll a apoprotein A2 (734 aa).

8 helical membrane-spanning segments follow: residues 46–69 (IFASHFGQLAIIFLWTSGNLFHVA), 135–158 (LYTGALFLLCLSAISLIAGWLHLQ), 175–199 (LNHHLSGLFGVSSLAWAGHLVHVAI), 273–291 (IAHHHLAIAFLFLVAGHMY), 330–353 (IHFQLGLALASLGVITSLVAQHMY), 369–395 (AALYTHHQYIAGFIMTGAFAHGAIFFI), 417–439 (AIISHLSWASLFLGFHTLGLYVH), and 517–535 (FLVHHAIALGLHTTTLILV). Residues C559 and C568 each coordinate [4Fe-4S] cluster. Helical transmembrane passes span 575–596 (AFYLAVFWMLNTIGWVTFYWHW) and 643–665 (LSVWAWMFLFGHLVWATGFMFLI). Residues H654, M662, and Y670 each coordinate chlorophyll a. W671 is a phylloquinone binding site. The chain crosses the membrane as a helical span at residues 707–727 (LVGLAHFSVGYIFTYAAFLIA).

The protein belongs to the PsaA/PsaB family. In terms of assembly, the PsaA/B heterodimer binds the P700 chlorophyll special pair and subsequent electron acceptors. PSI consists of a core antenna complex that captures photons, and an electron transfer chain that converts photonic excitation into a charge separation. The eukaryotic PSI reaction center is composed of at least 11 subunits. P700 is a chlorophyll a/chlorophyll a' dimer, A0 is one or more chlorophyll a, A1 is one or both phylloquinones and FX is a shared 4Fe-4S iron-sulfur center. is required as a cofactor.

It is found in the plastid. The protein resides in the chloroplast thylakoid membrane. It carries out the reaction reduced [plastocyanin] + hnu + oxidized [2Fe-2S]-[ferredoxin] = oxidized [plastocyanin] + reduced [2Fe-2S]-[ferredoxin]. In terms of biological role, psaA and PsaB bind P700, the primary electron donor of photosystem I (PSI), as well as the electron acceptors A0, A1 and FX. PSI is a plastocyanin-ferredoxin oxidoreductase, converting photonic excitation into a charge separation, which transfers an electron from the donor P700 chlorophyll pair to the spectroscopically characterized acceptors A0, A1, FX, FA and FB in turn. Oxidized P700 is reduced on the lumenal side of the thylakoid membrane by plastocyanin. This Dioscorea elephantipes (Elephant's foot yam) protein is Photosystem I P700 chlorophyll a apoprotein A2.